Reading from the N-terminus, the 992-residue chain is Disks large-associated protein 4 (992 aa).

Residues 1–20 (MKGLGDSRPRHLSDSLDPPH) show a composition bias toward basic and acidic residues. 2 disordered regions span residues 1 to 31 (MKGL…DRNP) and 157 to 225 (MEGT…PASG). Residues 162-171 (GKVGGNGSKK) are compositionally biased toward gly residues. The segment covering 172-194 (GGLEDGKGRRAKSKERAKAGEPK) has biased composition (basic and acidic residues). Polar residues predominate over residues 199–208 (SNISGWWSSD). Ser-206 and Ser-207 each carry phosphoserine. Arg-290 carries the omega-N-methylarginine modification. A disordered region spans residues 342–396 (TTLLSPRDMDSTAEGPIPCRRMRSGSYIKAMGDEDSDESGGGSPKPSPKTAARRQ). 7 positions are modified to phosphoserine: Ser-377, Ser-380, Ser-384, Ser-388, Ser-405, Ser-415, and Ser-421. Disordered stretches follow at residues 527–751 (SVSL…GPRQ), 763–798 (SYGD…AQPG), and 915–992 (TPEK…QTRL). Low complexity predominate over residues 528-554 (VSLQSLSPPPSTGSLSNSRTLPSSSCL). Polar residues predominate over residues 576 to 591 (VTVQSSTESAQDTYLD). Residues Ser-580, Ser-581, Ser-609, Ser-611, Ser-665, and Ser-744 each carry the phosphoserine modification. Residues 600–620 (TSQSGLSNSSDSLDSSTRPPS) are compositionally biased toward low complexity. Thr-915 is subject to Phosphothreonine. Composition is skewed to basic and acidic residues over residues 915–925 (TPEKRKEEKKP) and 940–958 (VSRD…EARK). Over residues 969-978 (VRQNSATESA) the composition is skewed to polar residues. At Ser-973 the chain carries Phosphoserine.

This sequence belongs to the SAPAP family. In terms of assembly, interacts with DLG1 and DLG4/PSD-95.

It localises to the membrane. Its function is as follows. May play a role in the molecular organization of synapses and neuronal cell signaling. Could be an adapter protein linking ion channel to the subsynaptic cytoskeleton. May induce enrichment of PSD-95/SAP90 at the plasma membrane. This is Disks large-associated protein 4 (Dlgap4) from Mus musculus (Mouse).